A 63-amino-acid chain; its full sequence is Omega-conotoxin Eu1.6 (63 aa).

The signal sequence occupies residues 1–21 (MGMRMMFTVFLLVVLATTVVS). Positions 22-47 (FTSDRAPDGRNAAAKAFGLITPTVRK) are excised as a propeptide. Disulfide bonds link C49–C55 and C50–C63. Residues 51–53 (SNP) form a ser-Xaa-Pro motif, crucial for potent interaction with nAChR region.

This sequence belongs to the conotoxin A superfamily. In terms of tissue distribution, expressed by the venom duct.

It is found in the secreted. Its function is as follows. This amidated peptide potently and teversibly inhibits Cav2.2/CACNA1B. Steady-state inactivation is enhanced at hyperpolarized membrane potentials. Also shows a weak interaction at alpha-3-beta-4/ CHRNA3-CHRNB4 and alpha-7/CHRNA7 nAChRs subtypes. In vivo, exhibits a potent analgesic activity in rat partial sciatic nerve injury and chronic constriction injury models. The protein is Omega-conotoxin Eu1.6 of Conus eburneus (Ivory cone).